The chain runs to 108 residues: Large ribosomal subunit protein uL24 (108 aa).

The protein belongs to the universal ribosomal protein uL24 family. Part of the 50S ribosomal subunit.

One of two assembly initiator proteins, it binds directly to the 5'-end of the 23S rRNA, where it nucleates assembly of the 50S subunit. In terms of biological role, one of the proteins that surrounds the polypeptide exit tunnel on the outside of the subunit. In Trichlorobacter lovleyi (strain ATCC BAA-1151 / DSM 17278 / SZ) (Geobacter lovleyi), this protein is Large ribosomal subunit protein uL24.